A 443-amino-acid chain; its full sequence is Mimosinase, chloroplastic (443 aa).

The N-terminal 43 residues, 1 to 43, are a transit peptide targeting the chloroplast; it reads MALSSTFLNPLVSSVAVNPQPKITSGKGFRVNCLIRTQQTVIK. The pyridoxal 5'-phosphate site is built by tyrosine 105, arginine 107, glycine 135, methionine 136, serine 254, and threonine 256. At lysine 257 the chain carries N6-(pyridoxal phosphate)lysine.

The protein belongs to the trans-sulfuration enzymes family. As to quaternary structure, forms homodimers. May form homotetramers from two homodimers. Pyridoxal 5'-phosphate serves as cofactor.

It is found in the plastid. The protein resides in the chloroplast. It catalyses the reaction L-mimosine + H2O = 3-hydroxy-4H-pyrid-4-one + pyruvate + NH4(+). Functionally, catalyzes the degradation of mimosine, which is a toxic secondary metabolite found in all Leucaena and Mimosa species. This Leucaena leucocephala (White popinac) protein is Mimosinase, chloroplastic.